We begin with the raw amino-acid sequence, 272 residues long: Elongation factor Ts (272 aa).

Residues 76-79 (TDFV) form an involved in Mg(2+) ion dislocation from EF-Tu region.

The protein belongs to the EF-Ts family.

The protein localises to the cytoplasm. Functionally, associates with the EF-Tu.GDP complex and induces the exchange of GDP to GTP. It remains bound to the aminoacyl-tRNA.EF-Tu.GTP complex up to the GTP hydrolysis stage on the ribosome. This is Elongation factor Ts from Corynebacterium jeikeium (strain K411).